Here is a 144-residue protein sequence, read N- to C-terminus: Large ribosomal subunit protein uL16 (144 aa).

This sequence belongs to the universal ribosomal protein uL16 family. In terms of assembly, part of the 50S ribosomal subunit.

Functionally, binds 23S rRNA and is also seen to make contacts with the A and possibly P site tRNAs. The chain is Large ribosomal subunit protein uL16 from Ligilactobacillus salivarius (strain UCC118) (Lactobacillus salivarius).